A 274-amino-acid polypeptide reads, in one-letter code: Prolyl 4-hydroxylase 13 (274 aa).

Topologically, residues 1 to 10 (MRSYGKEKKL) are cytoplasmic. A helical; Signal-anchor for type II membrane protein membrane pass occupies residues 11 to 31 (VFPYVFIACCFFLAIFGFCFF). The Lumenal segment spans residues 32–274 (NLFSQGISFS…TKWIRDQTYD (243 aa)). One can recognise a Fe2OG dioxygenase domain in the interval 151–270 (YYESFNILRY…KWVATKWIRD (120 aa)). Fe cation is bound by residues His-169 and Asp-171. N-linked (GlcNAc...) asparagine glycosylation occurs at Asn-242. His-251 provides a ligand contact to Fe cation. Position 261 (Lys-261) interacts with 2-oxoglutarate.

Belongs to the P4HA family. Requires Fe(2+) as cofactor. L-ascorbate serves as cofactor. In terms of tissue distribution, expressed in epidermal root hair cells (trichoblasts) root hairless cells (atrichoblasts).

The protein localises to the endoplasmic reticulum membrane. It carries out the reaction L-prolyl-[collagen] + 2-oxoglutarate + O2 = trans-4-hydroxy-L-prolyl-[collagen] + succinate + CO2. Its function is as follows. Catalyzes the post-translational formation of 4-hydroxyproline in -Xaa-Pro-Gly- sequences in proline-rich peptide sequences of plant glycoproteins and other proteins. Hydroxyprolines are important constituent of many plant cell wall glycoproteins such as extensins, hydroxyproline-rich glycoproteins, lectins and arabinogalactan proteins. Possesses high affinity for leucine-rich repeat and proline-rich extensins of root cell walls that are essential for root hair development. Hydroxyprolines define the subsequent O-glycosylation sites by arabinosyltransferases which elongate the O-arabinosides on extensins. The chain is Prolyl 4-hydroxylase 13 from Arabidopsis thaliana (Mouse-ear cress).